Consider the following 203-residue polypeptide: Probable cytochrome c oxidase subunit 3 (203 aa).

5 consecutive transmembrane segments (helical) span residues Ile30–Ala50, Leu69–Phe89, Trp102–Tyr122, Ile142–Leu162, and Ile179–Ile199.

Belongs to the cytochrome c oxidase subunit 3 family.

The protein resides in the cell membrane. It catalyses the reaction 4 Fe(II)-[cytochrome c] + O2 + 8 H(+)(in) = 4 Fe(III)-[cytochrome c] + 2 H2O + 4 H(+)(out). The polypeptide is Probable cytochrome c oxidase subunit 3 (ctaE) (Nocardia farcinica (strain IFM 10152)).